We begin with the raw amino-acid sequence, 393 residues long: Phosphoglycerate kinase (393 aa).

Substrate contacts are provided by residues 22–24 (DFN), R37, 60–63 (HLGR), R119, and R152. ATP-binding positions include K202, G293, E324, and 350-353 (GGDS).

Belongs to the phosphoglycerate kinase family. Monomer.

It localises to the cytoplasm. It catalyses the reaction (2R)-3-phosphoglycerate + ATP = (2R)-3-phospho-glyceroyl phosphate + ADP. It participates in carbohydrate degradation; glycolysis; pyruvate from D-glyceraldehyde 3-phosphate: step 2/5. This Borreliella burgdorferi (strain ZS7) (Borrelia burgdorferi) protein is Phosphoglycerate kinase.